The following is a 325-amino-acid chain: Probable arylamine N-acetyltransferase 1 (325 aa).

Residue Cys72 is the Acyl-thioester intermediate of the active site. Active-site residues include His112 and Asp127.

The protein belongs to the arylamine N-acetyltransferase family.

The enzyme catalyses an arylamine + acetyl-CoA = an N-acetylarylamine + CoA. The chain is Probable arylamine N-acetyltransferase 1 from Dictyostelium discoideum (Social amoeba).